Consider the following 413-residue polypeptide: MVFDKLLEQAGINLDLDGKDMMDSEMLGDVSDLIKIAVIGVGGSGNNTITRLYDLGVQGADLIAMNTDAQHLHYVKAHKKLLLGRSITHGKGSGGDPRVGYRAAEASASEIAEVVKGYDLIFLTAGMGNGTGTGATPVIARIIKETARNNGLPQEPLVISVVTFPFKMEGRVRIEKAKAGIEMLLEYSDTVIIIQNDKLKELVPKLPIQIAFRFADEIIARMVKGIVETIKLPSMVNIDYADIYSVMKGGGPALIGIGESDSNNRAVDAVMEALNNKMLDVEFGSGDKALVHFTVGPDVSLEEITKAMEIVYERLGEKSEIKWGAMIEEDMGKTVRAMVIMTGVKSPQILGNIEPNALTYSSSSIVVPRSKRLTESKVDEIFDSIDPRTSKLKKMKDNSRVNKIFRDLGFYEL.

Residues 130 to 132, glutamate 169, arginine 173, and aspartate 216 contribute to the GTP site; that span reads GTG.

Belongs to the FtsZ family. As to quaternary structure, homodimer. Polymerizes to form a dynamic ring structure in a strictly GTP-dependent manner. Interacts directly with several other division proteins.

It is found in the cytoplasm. Essential cell division protein that forms a contractile ring structure (Z ring) at the future cell division site. The regulation of the ring assembly controls the timing and the location of cell division. One of the functions of the FtsZ ring is to recruit other cell division proteins to the septum to produce a new cell wall between the dividing cells. Binds GTP and shows GTPase activity. The polypeptide is Cell division protein FtsZ 2 (Pyrococcus abyssi (strain GE5 / Orsay)).